Here is a 509-residue protein sequence, read N- to C-terminus: Cytochrome P450 6A1 (509 aa).

Residue Cys449 participates in heme binding.

Belongs to the cytochrome P450 family. The cofactor is heme.

Its subcellular location is the endoplasmic reticulum membrane. The protein resides in the microsome membrane. The catalysed reaction is an organic molecule + reduced [NADPH--hemoprotein reductase] + O2 = an alcohol + oxidized [NADPH--hemoprotein reductase] + H2O + H(+). Functionally, involved in the metabolism of insect hormones and in the breakdown of synthetic insecticides. This is Cytochrome P450 6A1 (CYP6A1) from Musca domestica (House fly).